The primary structure comprises 435 residues: uncharacterized protein (435 aa).

9 helical membrane passes run 40-60 (LVSTWLVVWGIWHVYFVEAVF), 103-123 (VLWTSITVWLIALAVVVWLIL), 133-153 (IMLALLVPVLPFAFSYAIYNP), 195-215 (LIHEAIPLEFALGAVLAIIVL), 226-246 (ICTALAIGPGTVSVLLLAVVG), 313-333 (VAVVGFRALFGAFLLGLLFFV), 358-378 (LALPVLASALLVPLFITAVDW), 381-401 (WWVMITLDVAIVYILYAIDRP), and 414-434 (VFVCVVLVLAVIPTGSANNIG).

It localises to the cell membrane. This is an uncharacterized protein from Mycobacterium bovis (strain ATCC BAA-935 / AF2122/97).